The primary structure comprises 242 residues: 1-(5-phosphoribosyl)-5-[(5-phosphoribosylamino)methylideneamino] imidazole-4-carboxamide isomerase (242 aa).

The active-site Proton acceptor is the D10.

The protein belongs to the HisA/HisF family.

The protein localises to the cytoplasm. The catalysed reaction is 1-(5-phospho-beta-D-ribosyl)-5-[(5-phospho-beta-D-ribosylamino)methylideneamino]imidazole-4-carboxamide = 5-[(5-phospho-1-deoxy-D-ribulos-1-ylimino)methylamino]-1-(5-phospho-beta-D-ribosyl)imidazole-4-carboxamide. The protein operates within amino-acid biosynthesis; L-histidine biosynthesis; L-histidine from 5-phospho-alpha-D-ribose 1-diphosphate: step 4/9. This is 1-(5-phosphoribosyl)-5-[(5-phosphoribosylamino)methylideneamino] imidazole-4-carboxamide isomerase from Corynebacterium diphtheriae (strain ATCC 700971 / NCTC 13129 / Biotype gravis).